The primary structure comprises 388 residues: ATP phosphoribosyltransferase regulatory subunit (388 aa).

This sequence belongs to the class-II aminoacyl-tRNA synthetase family. HisZ subfamily. Heteromultimer composed of HisG and HisZ subunits.

It localises to the cytoplasm. It participates in amino-acid biosynthesis; L-histidine biosynthesis; L-histidine from 5-phospho-alpha-D-ribose 1-diphosphate: step 1/9. In terms of biological role, required for the first step of histidine biosynthesis. May allow the feedback regulation of ATP phosphoribosyltransferase activity by histidine. The polypeptide is ATP phosphoribosyltransferase regulatory subunit (Acinetobacter baumannii (strain AB307-0294)).